The sequence spans 513 residues: Sugar transport protein MST8 (513 aa).

Over Met1–Pro17 the chain is Cytoplasmic. Residues Gly18 to Phe38 form a helical membrane-spanning segment. Over Gly39–Glu81 the chain is Extracellular. The helical transmembrane segment at Leu82–Ser102 threads the bilayer. Topologically, residues Val103–Gly116 are cytoplasmic. The chain crosses the membrane as a helical span at residues Gly117–Leu137. Residues Ile138–Ile139 lie on the Extracellular side of the membrane. The chain crosses the membrane as a helical span at residues Gly140–Ser160. The Cytoplasmic portion of the chain corresponds to Glu161 to Arg166. The chain crosses the membrane as a helical span at residues Met167–Asn187. The Extracellular portion of the chain corresponds to Leu188 to Gly201. The chain crosses the membrane as a helical span at residues Trp202–Phe222. The Cytoplasmic portion of the chain corresponds to Leu223–Leu294. A helical membrane pass occupies residues Gln295–Gly315. The Extracellular segment spans residues Phe316–Ala320. The helical transmembrane segment at Ser321 to Ala341 threads the bilayer. Topologically, residues Thr342–Gly347 are cytoplasmic. The chain crosses the membrane as a helical span at residues Arg348–Thr368. The Extracellular portion of the chain corresponds to Leu369 to Gly385. Residues Tyr386–Gly406 form a helical membrane-spanning segment. The Cytoplasmic segment spans residues Pro407 to Ala425. Residues Gln426–Met446 traverse the membrane as a helical segment. At Met447–His450 the chain is on the extracellular side. Residues Leu451–Phe471 form a helical membrane-spanning segment. Over Phe472–Thr512 the chain is Cytoplasmic.

The protein belongs to the major facilitator superfamily. Sugar transporter (TC 2.A.1.1) family. As to expression, expressed specifically in anthers.

Its subcellular location is the membrane. Its function is as follows. Mediates active uptake of hexoses by sugar:proton symport. May play an important role in transporting monosaccharides during anther development. This Oryza sativa subsp. japonica (Rice) protein is Sugar transport protein MST8.